Reading from the N-terminus, the 427-residue chain is Peptidase B (427 aa).

The Mn(2+) site is built by Lys-195 and Asp-200. Lys-207 is an active-site residue. Mn(2+) contacts are provided by Asp-218, Asp-277, and Glu-279. Arg-281 is a catalytic residue.

It belongs to the peptidase M17 family. In terms of assembly, homohexamer. Requires Mn(2+) as cofactor.

It localises to the cytoplasm. It catalyses the reaction Release of an N-terminal amino acid, Xaa, from a peptide or arylamide. Xaa is preferably Glu or Asp but may be other amino acids, including Leu, Met, His, Cys and Gln.. Its function is as follows. Probably plays an important role in intracellular peptide degradation. The sequence is that of Peptidase B from Shigella flexneri.